The following is a 209-amino-acid chain: Small ribosomal subunit protein uS3 (209 aa).

Residues 17–86 form the KH type-2 domain; sequence IDEYLEKELR…NPQIEVEEIK (70 aa).

Belongs to the universal ribosomal protein uS3 family. Part of the 30S ribosomal subunit.

In terms of biological role, binds the lower part of the 30S subunit head. The chain is Small ribosomal subunit protein uS3 from Thermococcus gammatolerans (strain DSM 15229 / JCM 11827 / EJ3).